The primary structure comprises 836 residues: Spliceosome associated factor 3, U4/U6 recycling protein (836 aa).

HAT repeat units lie at residues 127–163 (EDFK…YEMS), 296–329 (KLPQ…FERD), 331–367 (RPNE…LLRR), 418–451 (KNMD…LERQ), and 453–486 (GDKE…FERE). Residues 507–585 (RAIRPQKKVS…APGSFAVQKA (79 aa)) are disordered. Residues 540–550 (IVKKVKGDDGG) show a composition bias toward basic and acidic residues. Residues 558–579 (SNAKSSSAVSSSNASSTPAPGS) are compositionally biased toward low complexity. 2 RRM domains span residues 593–668 (RTIF…ANDP) and 683–760 (SKVF…LSNP). Disordered stretches follow at residues 757 to 786 (LSNP…PRKG) and 811 to 830 (AMDV…DQFR). The segment covering 816-827 (EGTSTSQPLSND) has biased composition (polar residues).

Forms a complex composed of sart-3, terminal uridylyltransferase usip-1 and U6 snRNA; complex formation is mediated by usip-1 and sart-3 binding to U6 snRNA. Associates with U4 and U6 snRNP complexes, probably by interacting with U4 and U6 snRNAs. In terms of tissue distribution, ubiquitously expressed.

The protein resides in the nucleus. The protein localises to the nucleoplasm. U6 snRNP-binding protein that functions as a recycling factor of the splicing machinery. Promotes the initial reassembly of U4 and U6 snRNPs following their ejection from the spliceosome during its maturation. The polypeptide is Spliceosome associated factor 3, U4/U6 recycling protein (Caenorhabditis elegans).